Consider the following 380-residue polypeptide: Tubulin-like protein CetZ (380 aa).

Residues 10-14 (QCGTK), 103-105 (GTG), E136, N163, and N181 each bind GTP. A disordered region spans residues 359–380 (PSLEATGSDDPEGFAEYREVSR).

This sequence belongs to the CetZ family.

Its subcellular location is the cytoplasm. Its function is as follows. Involved in cell shape control. The polypeptide is Tubulin-like protein CetZ (Thermococcus kodakarensis (strain ATCC BAA-918 / JCM 12380 / KOD1) (Pyrococcus kodakaraensis (strain KOD1))).